The primary structure comprises 78 residues: Major outer membrane lipoprotein Lpp (78 aa).

An N-terminal signal peptide occupies residues 1–19; it reads MKAKIVLGAVILASGLLAG. A lipid anchor (N-palmitoyl cysteine) is attached at C20. The S-diacylglycerol cysteine moiety is linked to residue C20. 2 repeats span residues 25–35 and 39–49; these read NAQLDQISSDV and NTQVQQLSSDV. Positions 28–62 form a coiled coil; sequence LDQISSDVNRLNTQVQQLSSDVQSANAQAKAAYEA. N6-murein peptidoglycan lysine is present on K78.

This sequence belongs to the Lpp family. Homotrimer.

The protein localises to the cell outer membrane. The protein resides in the secreted. It is found in the cell wall. Functionally, a highly abundant outer membrane lipoprotein that controls the distance between the inner and outer membranes. The only protein known to be covalently linked to the peptidoglycan network (PGN). Also non-covalently binds the PGN. The link between the cell outer membrane and PGN contributes to maintenance of the structural and functional integrity of the cell envelope, and maintains the correct distance between the PGN and the outer membrane. This is Major outer membrane lipoprotein Lpp from Proteus mirabilis.